A 440-amino-acid polypeptide reads, in one-letter code: Glutamyl-tRNA reductase (440 aa).

Residues 50-53 (TCNR), S109, 114-116 (EPQ), and Q120 contribute to the substrate site. C51 functions as the Nucleophile in the catalytic mechanism. 189 to 194 (GAGEMA) contributes to the NADP(+) binding site.

This sequence belongs to the glutamyl-tRNA reductase family. Homodimer.

It catalyses the reaction (S)-4-amino-5-oxopentanoate + tRNA(Glu) + NADP(+) = L-glutamyl-tRNA(Glu) + NADPH + H(+). The protein operates within porphyrin-containing compound metabolism; protoporphyrin-IX biosynthesis; 5-aminolevulinate from L-glutamyl-tRNA(Glu): step 1/2. Functionally, catalyzes the NADPH-dependent reduction of glutamyl-tRNA(Glu) to glutamate 1-semialdehyde (GSA). This Nitratidesulfovibrio vulgaris (strain ATCC 29579 / DSM 644 / CCUG 34227 / NCIMB 8303 / VKM B-1760 / Hildenborough) (Desulfovibrio vulgaris) protein is Glutamyl-tRNA reductase.